The following is a 493-amino-acid chain: Cobyric acid synthase (493 aa).

A GATase cobBQ-type domain is found at 252-441 (DLKITVIRLP…LHGLLENGPW (190 aa)). The active-site Nucleophile is the Cys-333. His-433 is an active-site residue.

This sequence belongs to the CobB/CobQ family. CobQ subfamily.

It participates in cofactor biosynthesis; adenosylcobalamin biosynthesis. Its function is as follows. Catalyzes amidations at positions B, D, E, and G on adenosylcobyrinic A,C-diamide. NH(2) groups are provided by glutamine, and one molecule of ATP is hydrogenolyzed for each amidation. This is Cobyric acid synthase from Thermosynechococcus vestitus (strain NIES-2133 / IAM M-273 / BP-1).